Here is a 764-residue protein sequence, read N- to C-terminus: Subtilisin-like protease SBT1.6 (764 aa).

The first 20 residues, 1–20, serve as a signal peptide directing secretion; it reads MASSTIVLLLFLSFPFISFA. The Inhibitor I9 domain maps to 46–99; sequence HWYSTEFAEESRIVHVYHTVFHGFSAVVTPDEADNLRNHPAVLAVFEDRRRELH. Residues 103–606 enclose the Peptidase S8 domain; that stretch reads SPQFLGLQNQ…SGHLNLGRAM (504 aa). D131 (charge relay system) is an active-site residue. N191 carries an N-linked (GlcNAc...) asparagine glycan. H205 serves as the catalytic Charge relay system. A PA domain is found at 377–457; the sequence is SSASLCMENT…NEGDRIKAYA (81 aa). S538 acts as the Charge relay system in catalysis. N578 is a glycosylation site (N-linked (GlcNAc...) asparagine).

The protein belongs to the peptidase S8 family. Expressed in roots, leaves and flowers of mature plants.

This is Subtilisin-like protease SBT1.6 from Arabidopsis thaliana (Mouse-ear cress).